A 176-amino-acid chain; its full sequence is Ribosome rescue factor SmrB (176 aa).

Residues 98–173 (LDLHGLTQKQ…GTAALLVLVE (76 aa)) form the Smr domain.

The protein belongs to the SmrB family. Associates with collided ribosomes, but not with correctly translating polysomes.

Acts as a ribosome collision sensor. Detects stalled/collided disomes (pairs of ribosomes where the leading ribosome is stalled and a second ribosome has collided with it) and endonucleolytically cleaves mRNA at the 5' boundary of the stalled ribosome. Stalled/collided disomes form a new interface (primarily via the 30S subunits) that binds SmrB. Cleaved mRNA becomes available for tmRNA ligation, leading to ribosomal subunit dissociation and rescue of stalled ribosomes. The protein is Ribosome rescue factor SmrB of Yersinia enterocolitica serotype O:8 / biotype 1B (strain NCTC 13174 / 8081).